We begin with the raw amino-acid sequence, 360 residues long: Phospho-N-acetylmuramoyl-pentapeptide-transferase (360 aa).

10 helical membrane-spanning segments follow: residues 27–47, 73–93, 94–114, 132–152, 168–188, 199–219, 236–256, 263–283, 288–308, and 338–358; these read ILSI…LIAW, TMGG…WADL, TNPY…VGFV, WKYF…YAYG, VMPQ…VGTS, GLAI…AWAT, ASEL…FLWF, VFMG…IAVL, FLLV…ILQV, and VIVR…ATLK.

The protein belongs to the glycosyltransferase 4 family. MraY subfamily. Mg(2+) serves as cofactor.

The protein localises to the cell inner membrane. It carries out the reaction UDP-N-acetyl-alpha-D-muramoyl-L-alanyl-gamma-D-glutamyl-meso-2,6-diaminopimeloyl-D-alanyl-D-alanine + di-trans,octa-cis-undecaprenyl phosphate = di-trans,octa-cis-undecaprenyl diphospho-N-acetyl-alpha-D-muramoyl-L-alanyl-D-glutamyl-meso-2,6-diaminopimeloyl-D-alanyl-D-alanine + UMP. It participates in cell wall biogenesis; peptidoglycan biosynthesis. In terms of biological role, catalyzes the initial step of the lipid cycle reactions in the biosynthesis of the cell wall peptidoglycan: transfers peptidoglycan precursor phospho-MurNAc-pentapeptide from UDP-MurNAc-pentapeptide onto the lipid carrier undecaprenyl phosphate, yielding undecaprenyl-pyrophosphoryl-MurNAc-pentapeptide, known as lipid I. This is Phospho-N-acetylmuramoyl-pentapeptide-transferase from Aliivibrio fischeri (strain MJ11) (Vibrio fischeri).